We begin with the raw amino-acid sequence, 284 residues long: Bifunctional protein FolD (284 aa).

Residues 165–167 (GRS), Ser-190, and Ile-231 contribute to the NADP(+) site.

It belongs to the tetrahydrofolate dehydrogenase/cyclohydrolase family. Homodimer.

It carries out the reaction (6R)-5,10-methylene-5,6,7,8-tetrahydrofolate + NADP(+) = (6R)-5,10-methenyltetrahydrofolate + NADPH. The catalysed reaction is (6R)-5,10-methenyltetrahydrofolate + H2O = (6R)-10-formyltetrahydrofolate + H(+). It participates in one-carbon metabolism; tetrahydrofolate interconversion. Catalyzes the oxidation of 5,10-methylenetetrahydrofolate to 5,10-methenyltetrahydrofolate and then the hydrolysis of 5,10-methenyltetrahydrofolate to 10-formyltetrahydrofolate. This is Bifunctional protein FolD from Streptococcus thermophilus (strain ATCC BAA-491 / LMD-9).